A 367-amino-acid polypeptide reads, in one-letter code: Phosphoribosylaminoimidazole-succinocarboxamide synthase (367 aa).

Belongs to the SAICAR synthetase family.

It carries out the reaction 5-amino-1-(5-phospho-D-ribosyl)imidazole-4-carboxylate + L-aspartate + ATP = (2S)-2-[5-amino-1-(5-phospho-beta-D-ribosyl)imidazole-4-carboxamido]succinate + ADP + phosphate + 2 H(+). It functions in the pathway purine metabolism; IMP biosynthesis via de novo pathway; 5-amino-1-(5-phospho-D-ribosyl)imidazole-4-carboxamide from 5-amino-1-(5-phospho-D-ribosyl)imidazole-4-carboxylate: step 1/2. The protein is Phosphoribosylaminoimidazole-succinocarboxamide synthase of Shewanella piezotolerans (strain WP3 / JCM 13877).